Here is a 432-residue protein sequence, read N- to C-terminus: Adenylosuccinate synthetase (432 aa).

GTP-binding positions include 12-18 and 40-42; these read GDEGKGK and GHT. Asp-13 (proton acceptor) is an active-site residue. Mg(2+)-binding residues include Asp-13 and Gly-40. Residues 13–16, 38–41, Thr-132, Arg-146, Gln-226, Thr-241, and Arg-305 each bind IMP; these read DEGK and NAGH. Residue His-41 is the Proton donor of the active site. Residue 301–307 coordinates substrate; it reads TVTGRKR. GTP-binding positions include Arg-307, 333 to 335, and 415 to 417; these read KLD and STS.

It belongs to the adenylosuccinate synthetase family. In terms of assembly, homodimer. The cofactor is Mg(2+).

Its subcellular location is the cytoplasm. The catalysed reaction is IMP + L-aspartate + GTP = N(6)-(1,2-dicarboxyethyl)-AMP + GDP + phosphate + 2 H(+). It participates in purine metabolism; AMP biosynthesis via de novo pathway; AMP from IMP: step 1/2. Functionally, plays an important role in the de novo pathway of purine nucleotide biosynthesis. Catalyzes the first committed step in the biosynthesis of AMP from IMP. This chain is Adenylosuccinate synthetase, found in Allorhizobium ampelinum (strain ATCC BAA-846 / DSM 112012 / S4) (Agrobacterium vitis (strain S4)).